The sequence spans 305 residues: MSNKDQTNLLNNLKDIAQKAGLDISEELAKINAKLESSTALSKTWERVELARHSDRPRTLDYINLIFDNFTELHGDRFFGDDPAMIGGIGFIDGMPVTVIGTQKGRNLRETIDRNGGMANPEGYRKAMRLAKQAEKFKRPIITFIDTQGAYPGLGAEERGIGEAIAFNLREFSRLKTPIICIIIGEGGSGGALGIGVGDKIYMLENAIFSVISPEGCASILLRDSSRAKDAAAMLKITSQEVLDLKVINGIIPEPEKGAHTDPKKTADAIKEQILKDLADLTKRDPAVLVKYRSKKIRSIGKYSE.

In terms of domain architecture, CoA carboxyltransferase C-terminal spans 33–280 (AKLESSTALS…KEQILKDLAD (248 aa)).

This sequence belongs to the AccA family. Acetyl-CoA carboxylase is a heterohexamer composed of biotin carboxyl carrier protein (AccB), biotin carboxylase (AccC) and two subunits each of ACCase subunit alpha (AccA) and ACCase subunit beta (AccD).

Its subcellular location is the cytoplasm. The catalysed reaction is N(6)-carboxybiotinyl-L-lysyl-[protein] + acetyl-CoA = N(6)-biotinyl-L-lysyl-[protein] + malonyl-CoA. Its pathway is lipid metabolism; malonyl-CoA biosynthesis; malonyl-CoA from acetyl-CoA: step 1/1. Functionally, component of the acetyl coenzyme A carboxylase (ACC) complex. First, biotin carboxylase catalyzes the carboxylation of biotin on its carrier protein (BCCP) and then the CO(2) group is transferred by the carboxyltransferase to acetyl-CoA to form malonyl-CoA. The polypeptide is Acetyl-coenzyme A carboxylase carboxyl transferase subunit alpha (Treponema denticola (strain ATCC 35405 / DSM 14222 / CIP 103919 / JCM 8153 / KCTC 15104)).